The chain runs to 963 residues: Exportin-T (963 aa).

Residue Met1 is modified to N-acetylmethionine. Lys635 is modified (N6-acetyllysine).

This sequence belongs to the exportin family. In terms of assembly, found in a complex with XPOT, Ran and tRNA. Probably found in a complex with nucleoporins. Interacts with Ran and tRNA in a GTP-dependent manner.

It is found in the nucleus. Its subcellular location is the cytoplasm. Mediates the nuclear export of aminoacylated tRNAs. In the nucleus binds to tRNA and to the GTPase Ran in its active GTP-bound form. Docking of this trimeric complex to the nuclear pore complex (NPC) is mediated through binding to nucleoporins. Upon transit of a nuclear export complex into the cytoplasm, disassembling of the complex and hydrolysis of Ran-GTP to Ran-GDP (induced by RANBP1 and RANGAP1, respectively) cause release of the tRNA from the export receptor. XPOT then return to the nuclear compartment and mediate another round of transport. The directionality of nuclear export is thought to be conferred by an asymmetric distribution of the GTP- and GDP-bound forms of Ran between the cytoplasm and nucleus. The protein is Exportin-T (Xpot) of Mus musculus (Mouse).